The primary structure comprises 232 residues: Homeobox protein SAX-1 (232 aa).

3 disordered regions span residues 1-64 (CLPD…SCAK), 122-150 (KQHP…RPAA), and 185-208 (LLGA…LCPS). Residues 65 to 124 (PRRARTAFTYEQLVALENKFRATRYLSVCERLNLALSLSLTETQVKIWFQNRRTKWKKQH) constitute a DNA-binding region (homeobox). A compositionally biased stretch (low complexity) spans 126–142 (GADGAAAPAPPAAARCS).

It belongs to the NK-1 homeobox family. As to expression, transiently expressed in the birth zone of the whole spinal cord regardless of the axial level.

It localises to the nucleus. In Gallus gallus (Chicken), this protein is Homeobox protein SAX-1 (SAX1).